The chain runs to 162 residues: Putative ripening-related protein 7 (162 aa).

A signal peptide spans 1–30 (MAAAAASTKIVAVVVAVLLAILEMPSCAVA).

This sequence belongs to the kiwellin family.

Its subcellular location is the secreted. In Oryza sativa subsp. japonica (Rice), this protein is Putative ripening-related protein 7.